Here is a 334-residue protein sequence, read N- to C-terminus: Holliday junction branch migration complex subunit RuvB (334 aa).

The interval 4-186 is large ATPase domain (RuvB-L); sequence ADRLIAPENP…FGITQRLEYY (183 aa). Residues Ile-25, Arg-26, Gly-67, Lys-70, Thr-71, Thr-72, 133 to 135, Arg-176, Tyr-186, and Arg-223 contribute to the ATP site; that span reads EDY. Position 71 (Thr-71) interacts with Mg(2+). The segment at 187–257 is small ATPAse domain (RuvB-S); sequence KVKDLQDIVQ…TADKALNMLD (71 aa). The tract at residues 260-334 is head domain (RuvB-H); it reads AEGFDYMDRK…RAYLHFGIEK (75 aa). 2 residues coordinate DNA: Arg-315 and Arg-320.

This sequence belongs to the RuvB family. In terms of assembly, homohexamer. Forms an RuvA(8)-RuvB(12)-Holliday junction (HJ) complex. HJ DNA is sandwiched between 2 RuvA tetramers; dsDNA enters through RuvA and exits via RuvB. An RuvB hexamer assembles on each DNA strand where it exits the tetramer. Each RuvB hexamer is contacted by two RuvA subunits (via domain III) on 2 adjacent RuvB subunits; this complex drives branch migration. In the full resolvosome a probable DNA-RuvA(4)-RuvB(12)-RuvC(2) complex forms which resolves the HJ.

It is found in the cytoplasm. The catalysed reaction is ATP + H2O = ADP + phosphate + H(+). Its function is as follows. The RuvA-RuvB-RuvC complex processes Holliday junction (HJ) DNA during genetic recombination and DNA repair, while the RuvA-RuvB complex plays an important role in the rescue of blocked DNA replication forks via replication fork reversal (RFR). RuvA specifically binds to HJ cruciform DNA, conferring on it an open structure. The RuvB hexamer acts as an ATP-dependent pump, pulling dsDNA into and through the RuvAB complex. RuvB forms 2 homohexamers on either side of HJ DNA bound by 1 or 2 RuvA tetramers; 4 subunits per hexamer contact DNA at a time. Coordinated motions by a converter formed by DNA-disengaged RuvB subunits stimulates ATP hydrolysis and nucleotide exchange. Immobilization of the converter enables RuvB to convert the ATP-contained energy into a lever motion, pulling 2 nucleotides of DNA out of the RuvA tetramer per ATP hydrolyzed, thus driving DNA branch migration. The RuvB motors rotate together with the DNA substrate, which together with the progressing nucleotide cycle form the mechanistic basis for DNA recombination by continuous HJ branch migration. Branch migration allows RuvC to scan DNA until it finds its consensus sequence, where it cleaves and resolves cruciform DNA. The chain is Holliday junction branch migration complex subunit RuvB from Vibrio campbellii (strain ATCC BAA-1116).